Consider the following 335-residue polypeptide: MKRIAIDAMGGDNAPKAIVEGVNQVIEAFSDIEIQLYGDQTKINSYLIQSDRVAIIHTDEKIMSDDEPAKAVRRKKKASMVLAAKAVKEGKADAIISAGNTGALLAVGLFVVGRIKGVDRPGLLSTIPTVTGLGFDMLDLGANAENTVKHLHQYAILGSFYAKNVRGIANPRVGLLNNGTEETKGDPLRKATYELLTADNTISFVGNVEARELMSGVADVIVSDGFTGNAVLKSIEGTGISIMGQLKQIINSGGIKTKIGASLLKSSLYEMKKTLDYSSAGGAVLFGLKAPVVKSHGSSDVKAIFSTIKQVRTMLDTNVVGQLVEEFAKETQVND.

Belongs to the PlsX family. Homodimer. Probably interacts with PlsY.

The protein localises to the cytoplasm. The catalysed reaction is a fatty acyl-[ACP] + phosphate = an acyl phosphate + holo-[ACP]. The protein operates within lipid metabolism; phospholipid metabolism. Functionally, catalyzes the reversible formation of acyl-phosphate (acyl-PO(4)) from acyl-[acyl-carrier-protein] (acyl-ACP). This enzyme utilizes acyl-ACP as fatty acyl donor, but not acyl-CoA. The sequence is that of Phosphate acyltransferase from Streptococcus pyogenes serotype M6 (strain ATCC BAA-946 / MGAS10394).